A 461-amino-acid polypeptide reads, in one-letter code: Methylenetetrahydrofolate--tRNA-(uracil-5-)-methyltransferase TrmFO (461 aa).

16–21 contributes to the FAD binding site; the sequence is GAGLAG.

It belongs to the MnmG family. TrmFO subfamily. FAD is required as a cofactor.

The protein resides in the cytoplasm. The enzyme catalyses uridine(54) in tRNA + (6R)-5,10-methylene-5,6,7,8-tetrahydrofolate + NADH + H(+) = 5-methyluridine(54) in tRNA + (6S)-5,6,7,8-tetrahydrofolate + NAD(+). It catalyses the reaction uridine(54) in tRNA + (6R)-5,10-methylene-5,6,7,8-tetrahydrofolate + NADPH + H(+) = 5-methyluridine(54) in tRNA + (6S)-5,6,7,8-tetrahydrofolate + NADP(+). Functionally, catalyzes the folate-dependent formation of 5-methyl-uridine at position 54 (M-5-U54) in all tRNAs. The sequence is that of Methylenetetrahydrofolate--tRNA-(uracil-5-)-methyltransferase TrmFO from Parasynechococcus marenigrum (strain WH8102).